Consider the following 1234-residue polypeptide: 1-phosphatidylinositol 4,5-bisphosphate phosphodiesterase beta-3 (1234 aa).

A2 is modified (N-acetylalanine). The PI-PLC X-box domain occupies 315–466 (MDMTQPLSAY…LMGRILVKNK (152 aa)). Active-site residues include H330 and H377. Residues 465–586 (NKKRHRPSTG…GTASSEVNAT (122 aa)) are disordered. Residues S472, S488, S493, and S535 each carry the phosphoserine modification. Residues 486–513 (EQSNSALSESSAATEPSSPQLGSPSSDS) are compositionally biased toward low complexity. Residues 554-566 (REDEEEDEEEEET) are compositionally biased toward acidic residues. A compositionally biased stretch (polar residues) spans 577–586 (GTASSEVNAT). In terms of domain architecture, PI-PLC Y-box spans 589–705 (MSTLVNYVEP…GYLLKPEFMR (117 aa)). One can recognise a C2 domain in the interval 706 to 834 (RPDKSFDPFT…RNEANQPLCL (129 aa)). The span at 886-907 (ASTEMCQETPSQQQGSQLSSNP) shows a compositional bias: polar residues. A disordered region spans residues 886 to 936 (ASTEMCQETPSQQQGSQLSSNPVPNPLDDSPRWPPGPTTSPTSTSLSSPGQ). A compositionally biased stretch (low complexity) spans 924–934 (TSPTSTSLSSP). Phosphoserine occurs at positions 925 and 1105. The segment at 1196 to 1234 (SEGLGDGPLVACASNGHAAGSGGHQSGADSESQEENTQL) is disordered. The interval 1231–1234 (NTQL) is interaction with SHANK2.

In terms of assembly, interacts with LPAR2. Interacts with SHANK2. The cofactor is Ca(2+). In terms of tissue distribution, expressed in parotid gland, brain, liver, uterus, lung, heart, adrenal gland, and ovary. Not detected in spleen, pancreas, intestine, thymus or kidney.

Its subcellular location is the cytoplasm. It is found in the membrane. It localises to the nucleus. It carries out the reaction a 1,2-diacyl-sn-glycero-3-phospho-(1D-myo-inositol-4,5-bisphosphate) + H2O = 1D-myo-inositol 1,4,5-trisphosphate + a 1,2-diacyl-sn-glycerol + H(+). The enzyme catalyses a 1,2-diacyl-sn-glycero-3-phospho-(1D-myo-inositol) + H2O = 1D-myo-inositol 1-phosphate + a 1,2-diacyl-sn-glycerol + H(+). With respect to regulation, activated by G(q)/G(11) G alpha proteins in response to ligand-binding to G protein-coupled receptors. Catalyzes the production of the second messenger molecules diacylglycerol (DAG) and inositol 1,4,5-trisphosphate (IP3). Key transducer of G protein-coupled receptor signaling: activated by G(q)/G(11) G alpha proteins downstream of G protein-coupled receptors activation. In neutrophils, participates in a phospholipase C-activating N-formyl peptide-activated GPCR (G protein-coupled receptor) signaling pathway by promoting RASGRP4 activation by DAG, to promote neutrophil functional responses. This chain is 1-phosphatidylinositol 4,5-bisphosphate phosphodiesterase beta-3, found in Rattus norvegicus (Rat).